Consider the following 216-residue polypeptide: Imidazole glycerol phosphate synthase subunit HisH (216 aa).

One can recognise a Glutamine amidotransferase type-1 domain in the interval 2-216 (RVAIIDYGSG…LISNFLRWKP (215 aa)). The active-site Nucleophile is the Cys-88. Catalysis depends on residues His-196 and Glu-198.

Heterodimer of HisH and HisF.

The protein localises to the cytoplasm. It catalyses the reaction 5-[(5-phospho-1-deoxy-D-ribulos-1-ylimino)methylamino]-1-(5-phospho-beta-D-ribosyl)imidazole-4-carboxamide + L-glutamine = D-erythro-1-(imidazol-4-yl)glycerol 3-phosphate + 5-amino-1-(5-phospho-beta-D-ribosyl)imidazole-4-carboxamide + L-glutamate + H(+). The enzyme catalyses L-glutamine + H2O = L-glutamate + NH4(+). It participates in amino-acid biosynthesis; L-histidine biosynthesis; L-histidine from 5-phospho-alpha-D-ribose 1-diphosphate: step 5/9. IGPS catalyzes the conversion of PRFAR and glutamine to IGP, AICAR and glutamate. The HisH subunit catalyzes the hydrolysis of glutamine to glutamate and ammonia as part of the synthesis of IGP and AICAR. The resulting ammonia molecule is channeled to the active site of HisF. This chain is Imidazole glycerol phosphate synthase subunit HisH, found in Rhizobium meliloti (strain 1021) (Ensifer meliloti).